The sequence spans 67 residues: Large ribosomal subunit protein uL29 (67 aa).

This sequence belongs to the universal ribosomal protein uL29 family.

The sequence is that of Large ribosomal subunit protein uL29 from Desulfitobacterium hafniense (strain Y51).